Reading from the N-terminus, the 294-residue chain is tRNA dimethylallyltransferase (294 aa).

10 to 17 contributes to the ATP binding site; that stretch reads GITASGKS. 12–17 contacts substrate; the sequence is TASGKS. The tract at residues 36 to 39 is interaction with substrate tRNA; sequence DSKQ.

It belongs to the IPP transferase family. In terms of assembly, monomer. Mg(2+) serves as cofactor.

The enzyme catalyses adenosine(37) in tRNA + dimethylallyl diphosphate = N(6)-dimethylallyladenosine(37) in tRNA + diphosphate. Catalyzes the transfer of a dimethylallyl group onto the adenine at position 37 in tRNAs that read codons beginning with uridine, leading to the formation of N6-(dimethylallyl)adenosine (i(6)A). This chain is tRNA dimethylallyltransferase, found in Wolbachia sp. subsp. Drosophila simulans (strain wRi).